Reading from the N-terminus, the 348-residue chain is tRNA N6-adenosine threonylcarbamoyltransferase (348 aa).

Fe cation-binding residues include His118 and His122. Substrate is bound by residues 140 to 144, Asp173, Gly186, Asp190, and Asn279; that span reads LVSGG. Asp309 contacts Fe cation.

This sequence belongs to the KAE1 / TsaD family. Fe(2+) serves as cofactor.

The protein resides in the cytoplasm. The enzyme catalyses L-threonylcarbamoyladenylate + adenosine(37) in tRNA = N(6)-L-threonylcarbamoyladenosine(37) in tRNA + AMP + H(+). Functionally, required for the formation of a threonylcarbamoyl group on adenosine at position 37 (t(6)A37) in tRNAs that read codons beginning with adenine. Is involved in the transfer of the threonylcarbamoyl moiety of threonylcarbamoyl-AMP (TC-AMP) to the N6 group of A37, together with TsaE and TsaB. TsaD likely plays a direct catalytic role in this reaction. This Lactiplantibacillus plantarum (strain ATCC BAA-793 / NCIMB 8826 / WCFS1) (Lactobacillus plantarum) protein is tRNA N6-adenosine threonylcarbamoyltransferase.